Consider the following 509-residue polypeptide: Maturase K (509 aa).

It belongs to the intron maturase 2 family. MatK subfamily.

Its subcellular location is the plastid. The protein localises to the chloroplast. Its function is as follows. Usually encoded in the trnK tRNA gene intron. Probably assists in splicing its own and other chloroplast group II introns. This Vatairea macrocarpa protein is Maturase K.